Reading from the N-terminus, the 58-residue chain is UPF0339 protein TDE_0826 (58 aa).

The protein belongs to the UPF0339 family.

The protein is UPF0339 protein TDE_0826 of Treponema denticola (strain ATCC 35405 / DSM 14222 / CIP 103919 / JCM 8153 / KCTC 15104).